Consider the following 430-residue polypeptide: Histidinol dehydrogenase (430 aa).

Positions 130, 191, and 214 each coordinate NAD(+). Residues serine 237, glutamine 259, and histidine 262 each coordinate substrate. Residues glutamine 259 and histidine 262 each coordinate Zn(2+). Active-site proton acceptor residues include glutamate 327 and histidine 328. Histidine 328, aspartate 361, glutamate 415, and histidine 420 together coordinate substrate. Zn(2+) is bound at residue aspartate 361. A Zn(2+)-binding site is contributed by histidine 420.

Belongs to the histidinol dehydrogenase family. Requires Zn(2+) as cofactor.

It carries out the reaction L-histidinol + 2 NAD(+) + H2O = L-histidine + 2 NADH + 3 H(+). It functions in the pathway amino-acid biosynthesis; L-histidine biosynthesis; L-histidine from 5-phospho-alpha-D-ribose 1-diphosphate: step 9/9. Catalyzes the sequential NAD-dependent oxidations of L-histidinol to L-histidinaldehyde and then to L-histidine. In Brucella melitensis biotype 1 (strain ATCC 23456 / CCUG 17765 / NCTC 10094 / 16M), this protein is Histidinol dehydrogenase.